The sequence spans 414 residues: MSRQKKVLAIVLAGGEGKRLMPLTEDRAKPAVPFAGGYRLIDFALSNLVNSGYLQIVVLTQYKSHSLDRHLSETWRLSTQLGNYVTSVPAQQRRGKDWFLGSANAIYQSMNLIDDADPDIVVVVGADHVYRMDFADMVEKHIESGAKATVAGVRQPMEMVKSFGVIETDPQDPAKITRFVEKPDTTAPLPDDPHSFLASMGNYVFDRDALVEALRTDNEKADTDHDMGGDIMPYFAERGEAVVYDFTHNDVPGSTDRDRQYWRDVGTLESYFDSHMDLIRPLPVFNLYNYDWPIYTHQIMAPPARTVRGPNGQAGVAFDSIVSPGVLITGGHVGSSVLSPKVKVEHDARVTESVLMQNVQIGAGATVHRCILDKNVVVPPGTTVGLDREQDLARGLTVTESGLTIAPKNYRFER.

Alpha-D-glucose 1-phosphate contacts are provided by residues G164, 181–182 (EK), and S199.

The protein belongs to the bacterial/plant glucose-1-phosphate adenylyltransferase family. As to quaternary structure, homotetramer.

The catalysed reaction is alpha-D-glucose 1-phosphate + ATP + H(+) = ADP-alpha-D-glucose + diphosphate. It participates in glycan biosynthesis; glycogen biosynthesis. Involved in the biosynthesis of ADP-glucose, a building block required for the elongation reactions to produce glycogen. Catalyzes the reaction between ATP and alpha-D-glucose 1-phosphate (G1P) to produce pyrophosphate and ADP-Glc. The protein is Glucose-1-phosphate adenylyltransferase of Kocuria rhizophila (strain ATCC 9341 / DSM 348 / NBRC 103217 / DC2201).